Here is a 654-residue protein sequence, read N- to C-terminus: DNA ligase (654 aa).

Residues 32–36 (DAVYD) and 81–82 (SL) each bind NAD(+). K112 (N6-AMP-lysine intermediate) is an active-site residue. Residues R133, E167, and K306 each contribute to the NAD(+) site. Zn(2+)-binding residues include C400, C403, C416, and C421. Residues 577–654 (ESSSIFSHKT…EEELLKYLKE (78 aa)) form the BRCT domain.

The protein belongs to the NAD-dependent DNA ligase family. LigA subfamily. The cofactor is Mg(2+). Mn(2+) is required as a cofactor.

The catalysed reaction is NAD(+) + (deoxyribonucleotide)n-3'-hydroxyl + 5'-phospho-(deoxyribonucleotide)m = (deoxyribonucleotide)n+m + AMP + beta-nicotinamide D-nucleotide.. DNA ligase that catalyzes the formation of phosphodiester linkages between 5'-phosphoryl and 3'-hydroxyl groups in double-stranded DNA using NAD as a coenzyme and as the energy source for the reaction. It is essential for DNA replication and repair of damaged DNA. This Helicobacter acinonychis (strain Sheeba) protein is DNA ligase.